A 335-amino-acid polypeptide reads, in one-letter code: Terpene synthase 4 (335 aa).

The short motif at 103-108 is the DDxx(x)D/E motif element; that stretch reads DDYIFE. Positions 243 to 251 match the NDxxSxxxD/E motif motif; sequence NDLYSFNRE.

It belongs to the terpene synthase family.

The catalysed reaction is (2E,6E)-farnesyl diphosphate + H2O = (6E)-nerolidol + diphosphate. Terpene synthase that converts its substrate farnesyl diphosphate (FPP) into the sesquiterpene (E)-nerolidol. This Dictyostelium discoideum (Social amoeba) protein is Terpene synthase 4.